The following is a 130-amino-acid chain: Methylglyoxal synthase (130 aa).

An MGS-like domain is found at 1 to 130 (MSKPRIALIA…DLARTMQDVC (130 aa)). Substrate is bound by residues His11, Lys15, 37–40 (TGTT), and 57–58 (SG). The active-site Proton donor/acceptor is the Asp63. His90 serves as a coordination point for substrate.

This sequence belongs to the methylglyoxal synthase family.

It catalyses the reaction dihydroxyacetone phosphate = methylglyoxal + phosphate. Functionally, catalyzes the formation of methylglyoxal from dihydroxyacetone phosphate. This is Methylglyoxal synthase from Burkholderia multivorans (strain ATCC 17616 / 249).